A 260-amino-acid polypeptide reads, in one-letter code: Glutamate racemase (260 aa).

Substrate-binding positions include 14-15 and 46-47; these read DS and YG. Residue C77 is the Proton donor/acceptor of the active site. Residue 78–79 coordinates substrate; that stretch reads NT. Catalysis depends on C188, which acts as the Proton donor/acceptor. 189 to 190 is a substrate binding site; it reads TH.

Belongs to the aspartate/glutamate racemases family.

It carries out the reaction L-glutamate = D-glutamate. Its pathway is cell wall biogenesis; peptidoglycan biosynthesis. Its function is as follows. Provides the (R)-glutamate required for cell wall biosynthesis. The protein is Glutamate racemase of Clostridium perfringens (strain SM101 / Type A).